A 1154-amino-acid chain; its full sequence is Spike glycoprotein (1154 aa).

The signal sequence occupies residues 1–18 (MLERSLLLATLLSALCSA). The Extracellular portion of the chain corresponds to 19–1096 (NLFGNNSYVY…LKTYIKWPWY (1078 aa)). N-linked (GlcNAc...) asparagine; by host glycosylation is found at N23, N74, N102, N139, N145, N164, N179, N213, N238, N248, N265, N272, N277, N307, N426, N448, N514, N531, N543, N580, N592, N670, and N677. Positions 770 to 875 (IPFATQLQAR…QVDRIITGRL (106 aa)) are heptad repeat 1 (HR1). A coiled-coil region spans residues 823-867 (QDVVNKQSSILTETMASLNKNFGAISSVLQDIYQQLDSIQADAQV). 7 N-linked (GlcNAc...) asparagine; by host glycosylation sites follow: N948, N961, N980, N1015, N1039, N1052, and N1075. Residues 1025-1106 (NDDFDFDDEL…VWLAIAFATI (82 aa)) are heptad repeat 2 (HR2). The stretch at 1056 to 1084 (PILDIGSEIDRIQGVIQGLNDSLIDLETL) forms a coiled coil. A helical transmembrane segment spans residues 1097 to 1117 (VWLAIAFATIIFILILGWLFF). Over 1118–1154 (MTGCCGCCCGCFGIIPLMSKCGKKSSYYTTFDNDVVT) the chain is Cytoplasmic.

The protein belongs to the gammacoronaviruses spike protein family. Homotrimer; each monomer consists of a S1 and a S2 subunit. The resulting peplomers protrude from the virus surface as spikes. Post-translationally, specific enzymatic cleavages in vivo yield mature proteins. The precursor is processed into S1 and S2 by host cell furin or furin-like protease to yield the mature S1 and S2 proteins. The cleavage site between S1 and S2 requires the optimal sequence [KR]-X-[KR]-R. Additionally, a second cleavage leads to the release of a fusion peptide after viral attachment to host cell receptor.

It localises to the virion membrane. The protein resides in the host endoplasmic reticulum-Golgi intermediate compartment membrane. Functionally, attaches the virion to the host cell membrane by interacting with sialic acids, initiating the infection. Its function is as follows. Mediates fusion of the virion and cellular membranes by acting as a class I viral fusion protein. Under the current model, the protein has at least 3 conformational states: pre-fusion native state, pre-hairpin intermediate state, and post-fusion hairpin state. During viral and target cell membrane fusion, the coiled coil regions (heptad repeats) assume a trimer-of-hairpins structure, positioning the fusion peptide in close proximity to the C-terminal region of the ectodomain. The formation of this structure appears to drive apposition and subsequent fusion of viral and target cell membranes. Acts as a viral fusion peptide after S2 cleavage occurring upon virus endocytosis. The chain is Spike glycoprotein from Gallus gallus (Chicken).